A 329-amino-acid chain; its full sequence is MARRYLLEFEKPLVELEKQIEQIRELARDSEVDVSQQLLQLETLAARRREEIFSALTPAEKIQVARHPQRPSTLDFIQMFCEDWIELHGDRNCSDDSALIGGIARIEDIPVLLIGQQKGRDTKENVARNFGMAKPSGYRKALRLMNHADKFNLPIISFIDTPGAYAGLLAEEQGQGEAIAVNLREMFRIKVPIIATVIGEGGSGGALGIGVADRLLMFEHSVYTVASPEACASILWRDAAKAPDAAAALKITGSDLLTLGIVDEVIKEPAGGNNWAPLQAGEALKTSILRHLTELSTLSEHKLRDNRYKKFRQIGSFLELSSQEEQLIT.

In terms of domain architecture, CoA carboxyltransferase C-terminal spans 40-294 (QLETLAARRR…KTSILRHLTE (255 aa)).

It belongs to the AccA family. In terms of assembly, acetyl-CoA carboxylase is a heterohexamer composed of biotin carboxyl carrier protein (AccB), biotin carboxylase (AccC) and two subunits each of ACCase subunit alpha (AccA) and ACCase subunit beta (AccD).

It is found in the cytoplasm. The enzyme catalyses N(6)-carboxybiotinyl-L-lysyl-[protein] + acetyl-CoA = N(6)-biotinyl-L-lysyl-[protein] + malonyl-CoA. Its pathway is lipid metabolism; malonyl-CoA biosynthesis; malonyl-CoA from acetyl-CoA: step 1/1. Component of the acetyl coenzyme A carboxylase (ACC) complex. First, biotin carboxylase catalyzes the carboxylation of biotin on its carrier protein (BCCP) and then the CO(2) group is transferred by the carboxyltransferase to acetyl-CoA to form malonyl-CoA. The chain is Acetyl-coenzyme A carboxylase carboxyl transferase subunit alpha from Prochlorococcus marinus (strain SARG / CCMP1375 / SS120).